Here is a 655-residue protein sequence, read N- to C-terminus: DNA mismatch repair protein MutL (655 aa).

2 disordered regions span residues 357–416 and 439–460; these read EKKQ…DDYT and DFDSDISNHSDSDIKGSVSKDP. Residues 371-383 show a composition bias toward basic and acidic residues; sequence SHEEDEKNDDKAY. The span at 402-416 shows a compositional bias: polar residues; it reads NTSVSTSPNSDDDYT.

This sequence belongs to the DNA mismatch repair MutL/HexB family.

Its function is as follows. This protein is involved in the repair of mismatches in DNA. It is required for dam-dependent methyl-directed DNA mismatch repair. May act as a 'molecular matchmaker', a protein that promotes the formation of a stable complex between two or more DNA-binding proteins in an ATP-dependent manner without itself being part of a final effector complex. In Staphylococcus saprophyticus subsp. saprophyticus (strain ATCC 15305 / DSM 20229 / NCIMB 8711 / NCTC 7292 / S-41), this protein is DNA mismatch repair protein MutL.